Here is a 357-residue protein sequence, read N- to C-terminus: (+)-eremophilene synthase (357 aa).

Mg(2+)-binding residues include Asp100 and Glu105. Residues 100–105 (DDDFDE) carry the DDXXE motif motif. Residue Arg198 participates in substrate binding. 2 residues coordinate Mg(2+): Asn244 and Ser248. Lys251 is a binding site for substrate. Residue Asp252 coordinates Mg(2+). Residue 331-332 (RY) participates in substrate binding.

The protein belongs to the terpene synthase family. Mg(2+) serves as cofactor.

It catalyses the reaction (2E,6E)-farnesyl diphosphate = (+)-eremophilene + diphosphate. The protein operates within secondary metabolite biosynthesis; terpenoid biosynthesis. In terms of biological role, catalyzes the conversion of (2E,6E)-farnesyl diphosphate (FPP) to yield the bicyclic sesquiterpene eremophilene via a 1,10-cyclization, which requires the abstraction of the pyrophosphate from FPP to yield the (E,E)-germacradienyl cation. The only accepted substrate is farnesyl diphosphate (FPP). The polypeptide is (+)-eremophilene synthase (Gibberella fujikuroi (strain CBS 195.34 / IMI 58289 / NRRL A-6831) (Bakanae and foot rot disease fungus)).